The primary structure comprises 195 residues: Phosphoheptose isomerase (195 aa).

The 160-residue stretch at 36 to 195 folds into the SIS domain; sequence VSKVLQSGNT…IVEYNLFKME (160 aa). 51-53 lines the substrate pocket; that stretch reads NGG. Zn(2+)-binding residues include histidine 60 and glutamate 64. Residues glutamate 64, 95-96, 121-123, serine 126, and glutamine 173 contribute to the substrate site; these read ND and STS. Glutamine 173 and histidine 181 together coordinate Zn(2+).

Belongs to the SIS family. GmhA subfamily. The cofactor is Zn(2+).

The protein localises to the cytoplasm. It catalyses the reaction 2 D-sedoheptulose 7-phosphate = D-glycero-alpha-D-manno-heptose 7-phosphate + D-glycero-beta-D-manno-heptose 7-phosphate. It participates in carbohydrate biosynthesis; D-glycero-D-manno-heptose 7-phosphate biosynthesis; D-glycero-alpha-D-manno-heptose 7-phosphate and D-glycero-beta-D-manno-heptose 7-phosphate from sedoheptulose 7-phosphate: step 1/1. Its function is as follows. Catalyzes the isomerization of sedoheptulose 7-phosphate in D-glycero-D-manno-heptose 7-phosphate. In Leptospira borgpetersenii serovar Hardjo-bovis (strain JB197), this protein is Phosphoheptose isomerase.